A 242-amino-acid polypeptide reads, in one-letter code: E3 ubiquitin-protein ligase AIRP2 (242 aa).

An RING-type zinc finger spans residues 146–184 (CGICLEIRNKVVLPTCNHSMCINCYRNWRARSQSCPFCR).

Interacts with ATP1/SDIRIP1. As to expression, expressed in germinating seeds, flower organs and siliques.

It is found in the cytoplasm. It localises to the cytosol. The catalysed reaction is S-ubiquitinyl-[E2 ubiquitin-conjugating enzyme]-L-cysteine + [acceptor protein]-L-lysine = [E2 ubiquitin-conjugating enzyme]-L-cysteine + N(6)-ubiquitinyl-[acceptor protein]-L-lysine.. Functionally, possesses E3 ubiquitin-protein ligase activity in vitro when associated with the E2 enzyme UBC8 in vitro. Plays combinatory roles with AIRP1 in the positive regulation of the abscisic acid-mediated drought stress response. Plays a positive role in abscisic acid- and high salinity-regulated seed germination through the ubiquitin-proteasome-dependent down-regulation of ATP1/SDIRIP1. This Arabidopsis thaliana (Mouse-ear cress) protein is E3 ubiquitin-protein ligase AIRP2.